The sequence spans 88 residues: UPF0298 protein Bcer98_2635 (88 aa).

It belongs to the UPF0298 family.

The protein localises to the cytoplasm. This chain is UPF0298 protein Bcer98_2635, found in Bacillus cytotoxicus (strain DSM 22905 / CIP 110041 / 391-98 / NVH 391-98).